Consider the following 387-residue polypeptide: Leucine aminopeptidase 1 (387 aa).

The N-terminal stretch at 1 to 18 (MKIRAALALSATASGVLA) is a signal peptide. A propeptide spanning residues 19–87 (AVVPQQALLN…YPTLHQASNV (69 aa)) is cleaved from the precursor. Asn-179 carries an N-linked (GlcNAc...) asparagine glycan. Zn(2+) is bound by residues His-187, Asp-206, Glu-245, and Asp-272. Cys-321 and Cys-325 are disulfide-bonded. Zn(2+) is bound at residue His-354.

The protein belongs to the peptidase M28 family. M28E subfamily. As to quaternary structure, monomer. Zn(2+) serves as cofactor.

The protein resides in the secreted. In terms of biological role, extracellular aminopeptidase that allows assimilation of proteinaceous substrates. In Aspergillus oryzae (strain ATCC 42149 / RIB 40) (Yellow koji mold), this protein is Leucine aminopeptidase 1 (lap1).